Consider the following 492-residue polypeptide: 3-octaprenyl-4-hydroxybenzoate carboxy-lyase (492 aa).

Asn-172 is a binding site for Mn(2+). Prenylated FMN contacts are provided by residues 175 to 177, 189 to 191, and 194 to 195; these read IYR, RWL, and RG. Glu-238 serves as a coordination point for Mn(2+). The active-site Proton donor is Asp-287.

This sequence belongs to the UbiD family. In terms of assembly, homohexamer. Prenylated FMN is required as a cofactor. It depends on Mn(2+) as a cofactor.

The protein resides in the cell membrane. It carries out the reaction a 4-hydroxy-3-(all-trans-polyprenyl)benzoate + H(+) = a 2-(all-trans-polyprenyl)phenol + CO2. The protein operates within cofactor biosynthesis; ubiquinone biosynthesis. Its function is as follows. Catalyzes the decarboxylation of 3-octaprenyl-4-hydroxy benzoate to 2-octaprenylphenol, an intermediate step in ubiquinone biosynthesis. This chain is 3-octaprenyl-4-hydroxybenzoate carboxy-lyase, found in Pasteurella multocida (strain Pm70).